The primary structure comprises 159 residues: Transcriptional repressor NrdR (159 aa).

A zinc finger lies at 3 to 34 (CPFCRHDDTQVVDSRVSEDGAAIRRRRRCSAC). An ATP-cone domain is found at 49 to 139 (PAVVKKDGSR…VYRRFEDVSE (91 aa)).

It belongs to the NrdR family. Zn(2+) serves as cofactor.

Its function is as follows. Negatively regulates transcription of bacterial ribonucleotide reductase nrd genes and operons by binding to NrdR-boxes. This is Transcriptional repressor NrdR from Burkholderia thailandensis (strain ATCC 700388 / DSM 13276 / CCUG 48851 / CIP 106301 / E264).